Consider the following 137-residue polypeptide: ER-derived vesicles protein erv14 (137 aa).

The Cytoplasmic segment spans residues 1–9; the sequence is MMSFGSFVY. The helical transmembrane segment at 10-30 threads the bilayer; that stretch reads IACLLLNGANMLLQIFCVIMF. The Extracellular portion of the chain corresponds to 31-62; sequence SDLEMDYINPIDLCNKLNDLVMPEIISHTLVT. Residues 63–83 traverse the membrane as a helical segment; sequence LLLLLGKKWLLFLANLPLLVF. Residues 84–114 lie on the Cytoplasmic side of the membrane; the sequence is HANQVIHKTHILDATEIFRQLGRHKRDNFIK. Residues 115–135 form a helical membrane-spanning segment; the sequence is VTFYLIMFFTLLYCMVMSLIQ. The Extracellular portion of the chain corresponds to 136 to 137; sequence EE.

The protein belongs to the cornichon family.

The protein localises to the endoplasmic reticulum. It localises to the membrane. The protein resides in the golgi apparatus membrane. In terms of biological role, regulates export of the secretory proteins from the endoplasmic reticulum in COPII-coated vesicles. This Schizosaccharomyces pombe (strain 972 / ATCC 24843) (Fission yeast) protein is ER-derived vesicles protein erv14 (erv14).